The sequence spans 1049 residues: Probable ATP-dependent permease (1049 aa).

Positions 1–25 are cleaved as a signal peptide; it reads MGSHRRYLYYSILSFLLLSCSVVLA. The Lumenal segment spans residues 26-324; it reads KQDKTPFFEG…KDPTVSWQGK (299 aa). N-linked (GlcNAc...) asparagine glycosylation is found at Asn50, Asn114, Asn165, and Asn221. A helical transmembrane segment spans residues 325-345; it reads LVLALTAVMVLALFTFATFYI. The Cytoplasmic segment spans residues 346–463; sequence SKSPLFRNGL…ISMDRKSFSK (118 aa). Positions 384 to 631 constitute an ABC transporter domain; sequence LSFENITYSV…LRNEGYICPD (248 aa). 423 to 430 is a binding site for ATP; it reads GGSGAGKT. Residues 464–481 traverse the membrane as a helical segment; sequence IIGFVDQDDFLLPTLTVF. The Lumenal portion of the chain corresponds to 482-793; that stretch reads ETVLNSALLR…SFKNMYRNPK (312 aa). Residues Ser659 and Ser702 each carry the phosphoserine modification. The region spanning 793–1044 is the ABC transmembrane type-2 domain; it reads KLLLGNYLLT…IMGYLALKWI (252 aa). Residues 794–814 form a helical membrane-spanning segment; it reads LLLGNYLLTILLSLFLGTLYY. Residues 815-828 lie on the Cytoplasmic side of the membrane; that stretch reads NVSNDISGFQNRMG. A helical membrane pass occupies residues 829–849; it reads LFFFILTYFGFVTFTGLSSFA. Topologically, residues 850–877 are lumenal; it reads LERIIFIKERSNNYYSPLAYYISKIMSE. A helical membrane pass occupies residues 878–898; that stretch reads VVPLRVVPPILLSLIVYPMTG. Residues 899–909 are Cytoplasmic-facing; the sequence is LNMKDNAFFKC. A helical membrane pass occupies residues 910–930; it reads IGILILFNLGISLEILTIGII. The Lumenal segment spans residues 931 to 937; sequence FEDLNNS. Residue Asn935 is glycosylated (N-linked (GlcNAc...) asparagine). The helical transmembrane segment at 938–958 threads the bilayer; the sequence is IILSVLVLLGSLLFSGLFINT. The Cytoplasmic segment spans residues 959 to 1000; it reads KNITNVAFKYLKNFSVFYYAYESLLINEVKTLMLKERKYGLN. Residues 1001 to 1021 form a helical membrane-spanning segment; sequence IEVPGATILSTFGFVVQNLVF. Over 1022-1024 the chain is Lumenal; that stretch reads DIK. The chain crosses the membrane as a helical span at residues 1025–1045; it reads ILALFNVVFLIMGYLALKWIV. Residues 1046–1049 lie on the Cytoplasmic side of the membrane; the sequence is VEQK.

Belongs to the ABC transporter superfamily. ABCG family. Eye pigment precursor importer (TC 3.A.1.204) subfamily.

The protein localises to the endoplasmic reticulum membrane. The protein is Probable ATP-dependent permease (ADP1) of Saccharomyces cerevisiae (strain ATCC 204508 / S288c) (Baker's yeast).